Here is a 753-residue protein sequence, read N- to C-terminus: Replication restart protein PriA (753 aa).

Residues 228–395 (SLVAEQFQTC…LSKKYTLSVL (168 aa)) enclose the Helicase ATP-binding domain. 241–248 (GVTGSGKT) contacts ATP. Positions 337–340 (DEEH) match the DEAH box motif. Residues Cys458, Cys461, Cys467, Cys470, Cys485, Cys488, Cys499, and Cys502 each coordinate Zn(2+). In terms of domain architecture, Helicase C-terminal spans 491-646 (RLSKPITSCP…DFPAFYKEEI (156 aa)).

The protein belongs to the helicase family. PriA subfamily. Component of the replication restart primosome. The cofactor is Zn(2+).

It carries out the reaction Couples ATP hydrolysis with the unwinding of duplex DNA by translocating in the 3'-5' direction.. The enzyme catalyses ATP + H2O = ADP + phosphate + H(+). Its function is as follows. Initiates the restart of stalled replication forks, which reloads the replicative helicase on sites other than the origin of replication. Recognizes and binds to abandoned replication forks and remodels them to uncover a helicase loading site. Promotes assembly of the primosome at these replication forks. This chain is Replication restart protein PriA, found in Chlamydia trachomatis serovar D (strain ATCC VR-885 / DSM 19411 / UW-3/Cx).